Here is a 400-residue protein sequence, read N- to C-terminus: Melanization protease 1 (400 aa).

The N-terminal stretch at 1–22 is a signal peptide; that stretch reads MEPHFFFTVLWMLLMGTSSTYA. Positions 23-137 are cleaved as a propeptide — activation peptide; sequence QEIFGYCRTP…PNCGENFGDR (115 aa). The region spanning 28–91 is the Clip domain; that stretch reads YCRTPDENSG…FCFTNVQICC (64 aa). 3 cysteine pairs are disulfide-bonded: cysteine 29–cysteine 90, cysteine 39–cysteine 70, and cysteine 45–cysteine 91. Residues 98–120 form a disordered region; that stretch reads NQQPQWGNHPQPTQTTKPTKRSG. 3 cysteine pairs are disulfide-bonded: cysteine 130-cysteine 268, cysteine 168-cysteine 184, and cysteine 210-cysteine 220. The 262-residue stretch at 138 to 399 folds into the Peptidase S1 domain; sequence VVGGNETTKR…YLNWIENNVR (262 aa). Asparagine 142 is a glycosylation site (N-linked (GlcNAc...) asparagine). Histidine 183 acts as the Charge relay system in catalysis. Residues glutamate 201, aspartate 203, threonine 206, and aspartate 209 each coordinate Ca(2+). Aspartate 248 functions as the Charge relay system in the catalytic mechanism. Asparagine 296 carries N-linked (GlcNAc...) asparagine glycosylation. 2 cysteine pairs are disulfide-bonded: cysteine 315–cysteine 332 and cysteine 342–cysteine 375. Serine 346 functions as the Charge relay system in the catalytic mechanism.

The protein belongs to the peptidase S1 family. CLIP subfamily.

Serine protease which plays an essential role in the melanization immune response by acting downstream of sp7 to activate prophenoloxidase (PPO1). May function in diverse Hayan-dependent PPO1-activating cascades that are negatively controlled by different serpin proteins; Spn27A in the hemolymph and Spn77BA in the trachea. Regulation of melanization and PPO1 activation appears to be largely independent of the Toll signaling pathway. This Drosophila melanogaster (Fruit fly) protein is Melanization protease 1.